Consider the following 428-residue polypeptide: Serine--tRNA ligase (428 aa).

An L-serine-binding site is contributed by 234-236 (TAE). 265–267 (RRE) lines the ATP pocket. Glu-288 contacts L-serine. 352-355 (EISS) is an ATP binding site. Ser-388 serves as a coordination point for L-serine.

Belongs to the class-II aminoacyl-tRNA synthetase family. Type-1 seryl-tRNA synthetase subfamily. As to quaternary structure, homodimer. The tRNA molecule binds across the dimer.

Its subcellular location is the cytoplasm. The enzyme catalyses tRNA(Ser) + L-serine + ATP = L-seryl-tRNA(Ser) + AMP + diphosphate + H(+). It carries out the reaction tRNA(Sec) + L-serine + ATP = L-seryl-tRNA(Sec) + AMP + diphosphate + H(+). It functions in the pathway aminoacyl-tRNA biosynthesis; selenocysteinyl-tRNA(Sec) biosynthesis; L-seryl-tRNA(Sec) from L-serine and tRNA(Sec): step 1/1. Catalyzes the attachment of serine to tRNA(Ser). Is also able to aminoacylate tRNA(Sec) with serine, to form the misacylated tRNA L-seryl-tRNA(Sec), which will be further converted into selenocysteinyl-tRNA(Sec). In Synechococcus elongatus (strain ATCC 33912 / PCC 7942 / FACHB-805) (Anacystis nidulans R2), this protein is Serine--tRNA ligase.